Consider the following 252-residue polypeptide: Trans-aconitate 2-methyltransferase (252 aa).

It belongs to the methyltransferase superfamily. Tam family.

The protein localises to the cytoplasm. It catalyses the reaction trans-aconitate + S-adenosyl-L-methionine = (E)-3-(methoxycarbonyl)pent-2-enedioate + S-adenosyl-L-homocysteine. In terms of biological role, catalyzes the S-adenosylmethionine monomethyl esterification of trans-aconitate. This chain is Trans-aconitate 2-methyltransferase, found in Escherichia coli O9:H4 (strain HS).